The chain runs to 223 residues: ATP-dependent dethiobiotin synthetase BioD (223 aa).

A Mg(2+)-binding site is contributed by T16. Residue K37 is part of the active site. S41 contributes to the substrate binding site. Mg(2+)-binding residues include D50 and E111. Residues D50, 111–114 (EGAG), 171–172 (NQ), 201–203 (AHV), and E208 contribute to the ATP site.

This sequence belongs to the dethiobiotin synthetase family. As to quaternary structure, homodimer. The cofactor is Mg(2+).

It is found in the cytoplasm. It carries out the reaction (7R,8S)-7,8-diammoniononanoate + CO2 + ATP = (4R,5S)-dethiobiotin + ADP + phosphate + 3 H(+). It functions in the pathway cofactor biosynthesis; biotin biosynthesis; biotin from 7,8-diaminononanoate: step 1/2. In terms of biological role, catalyzes a mechanistically unusual reaction, the ATP-dependent insertion of CO2 between the N7 and N8 nitrogen atoms of 7,8-diaminopelargonic acid (DAPA, also called 7,8-diammoniononanoate) to form a ureido ring. This is ATP-dependent dethiobiotin synthetase BioD from Anaeromyxobacter sp. (strain Fw109-5).